A 269-amino-acid polypeptide reads, in one-letter code: Phosphonoacetaldehyde hydrolase (269 aa).

Aspartate 10 (nucleophile) is an active-site residue. 2 residues coordinate Mg(2+): aspartate 10 and alanine 12. Residue lysine 52 is the Schiff-base intermediate with substrate of the active site. Aspartate 186 contacts Mg(2+).

It belongs to the HAD-like hydrolase superfamily. PhnX family. In terms of assembly, homodimer. It depends on Mg(2+) as a cofactor.

It carries out the reaction phosphonoacetaldehyde + H2O = acetaldehyde + phosphate + H(+). Its function is as follows. Involved in phosphonate degradation. The polypeptide is Phosphonoacetaldehyde hydrolase (phnX) (Salmonella typhimurium (strain LT2 / SGSC1412 / ATCC 700720)).